The primary structure comprises 101 residues: Urease subunit beta (101 aa).

This sequence belongs to the urease beta subunit family. Heterotrimer of UreA (gamma), UreB (beta) and UreC (alpha) subunits. Three heterotrimers associate to form the active enzyme.

Its subcellular location is the cytoplasm. The enzyme catalyses urea + 2 H2O + H(+) = hydrogencarbonate + 2 NH4(+). It functions in the pathway nitrogen metabolism; urea degradation; CO(2) and NH(3) from urea (urease route): step 1/1. This Rhizobium leguminosarum bv. trifolii (strain WSM2304) protein is Urease subunit beta.